Reading from the N-terminus, the 199-residue chain is TATA-box-binding protein (199 aa).

Repeat copies occupy residues 10 to 86 and 101 to 177.

It belongs to the TBP family.

General factor that plays a role in the activation of archaeal genes transcribed by RNA polymerase. Binds specifically to the TATA box promoter element which lies close to the position of transcription initiation. This is TATA-box-binding protein from Pyrobaculum aerophilum (strain ATCC 51768 / DSM 7523 / JCM 9630 / CIP 104966 / NBRC 100827 / IM2).